The chain runs to 243 residues: NAD-dependent protein deacylase (243 aa).

The Deacetylase sirtuin-type domain maps to M1–G234. G10 to W29 is a binding site for NAD(+). Residues Y54 and R57 each contribute to the substrate site. Q91–D94 is an NAD(+) binding site. The active-site Proton acceptor is H109. Residues C117 and C136 each contribute to the Zn(2+) site. Residues G176 to S178, N202 to Q204, and A220 contribute to the NAD(+) site.

Belongs to the sirtuin family. Class III subfamily. Requires Zn(2+) as cofactor.

The protein localises to the cytoplasm. The catalysed reaction is N(6)-acetyl-L-lysyl-[protein] + NAD(+) + H2O = 2''-O-acetyl-ADP-D-ribose + nicotinamide + L-lysyl-[protein]. It catalyses the reaction N(6)-succinyl-L-lysyl-[protein] + NAD(+) + H2O = 2''-O-succinyl-ADP-D-ribose + nicotinamide + L-lysyl-[protein]. In terms of biological role, NAD-dependent lysine deacetylase and desuccinylase that specifically removes acetyl and succinyl groups on target proteins. Modulates the activities of several proteins which are inactive in their acylated form. This Shewanella oneidensis (strain ATCC 700550 / JCM 31522 / CIP 106686 / LMG 19005 / NCIMB 14063 / MR-1) protein is NAD-dependent protein deacylase.